Reading from the N-terminus, the 86-residue chain is MAHKKAGGSSRNGRDSEGRRLGVKKYGGENVIPGNILVRQRGTKMWPGVGVGMGKDHTLFALEEGRVAFTMRRNRQYVNVEVAAAQ.

The segment at 1–24 (MAHKKAGGSSRNGRDSEGRRLGVK) is disordered.

It belongs to the bacterial ribosomal protein bL27 family.

This is Large ribosomal subunit protein bL27 from Magnetococcus marinus (strain ATCC BAA-1437 / JCM 17883 / MC-1).